The chain runs to 362 residues: Protein U8 (362 aa).

Belongs to the herpesviridae US22 family.

This chain is Protein U8 (U8), found in Human herpesvirus 7 (strain JI) (HHV-7).